Consider the following 1318-residue polypeptide: Maestro heat-like repeat family member 5 (1318 aa).

A disordered region spans residues 1–38 (MDRQCSERPYSCTPTGRVSSAVSQNSRISPPVSTSMKD). The segment covering 12 to 38 (CTPTGRVSSAVSQNSRISPPVSTSMKD) has biased composition (polar residues). One copy of the HEAT 1 repeat lies at 581 to 618 (DELHFLLSHLYIWLASEKAHERQRAVHSCMILLKFLNH). Residues 676–695 (ESQAPKELSQAHSDGAPLWN) are disordered. HEAT repeat units lie at residues 769-811 (GAKL…SHTC), 840-880 (PTSH…LLAA), 996-1033 (RQIP…SPVL), 1037-1074 (LPKQ…HPDK), 1076-1113 (SLLQ…RLGA), 1118-1155 (SQSL…AMAD), 1164-1200 (QVHQ…LLRW), and 1278-1315 (VDTN…VSAR).

This Homo sapiens (Human) protein is Maestro heat-like repeat family member 5 (MROH5).